The chain runs to 97 residues: Osteocalcin (97 aa).

The first 20 residues, 1–20 (MKAAALLLLAALLTFSLCRS), serve as a signal peptide directing secretion. Positions 21–48 (APDGSDARSAKAFISHRQRAEMVRRQKR) are excised as a propeptide. One can recognise a Gla domain in the interval 49-95 (HYAQDSGVAGAPPNPLEAQREVCELSPDCDELADQIGFQEAYRRFYG). Residues Glu-65, Glu-69, Glu-72, and Asp-78 each contribute to the Ca(2+) site. A 4-carboxyglutamate mark is found at Glu-65, Glu-69, and Glu-72. The cysteines at positions 71 and 77 are disulfide-linked.

The protein belongs to the osteocalcin/matrix Gla protein family. Post-translationally, gamma-carboxyglutamate residues are formed by vitamin K dependent carboxylation by GGCX. These residues are essential for the binding of calcium.

Its subcellular location is the secreted. Functionally, the carboxylated form is one of the main organic components of the bone matrix, which constitutes 1-2% of the total bone protein. The carboxylated form binds strongly to apatite and calcium. The chain is Osteocalcin (BGLAP) from Gallus gallus (Chicken).